The primary structure comprises 257 residues: Deoxyribose-phosphate aldolase (257 aa).

Asp-102 functions as the Proton donor/acceptor in the catalytic mechanism. Lys-166 (schiff-base intermediate with acetaldehyde) is an active-site residue. The active-site Proton donor/acceptor is Lys-198.

It belongs to the DeoC/FbaB aldolase family. DeoC type 2 subfamily.

It localises to the cytoplasm. It catalyses the reaction 2-deoxy-D-ribose 5-phosphate = D-glyceraldehyde 3-phosphate + acetaldehyde. It functions in the pathway carbohydrate degradation; 2-deoxy-D-ribose 1-phosphate degradation; D-glyceraldehyde 3-phosphate and acetaldehyde from 2-deoxy-alpha-D-ribose 1-phosphate: step 2/2. In terms of biological role, catalyzes a reversible aldol reaction between acetaldehyde and D-glyceraldehyde 3-phosphate to generate 2-deoxy-D-ribose 5-phosphate. The protein is Deoxyribose-phosphate aldolase of Shewanella loihica (strain ATCC BAA-1088 / PV-4).